The chain runs to 104 residues: V-type ATP synthase subunit F (104 aa).

It belongs to the V-ATPase F subunit family.

In terms of biological role, produces ATP from ADP in the presence of a proton gradient across the membrane. In Thermus thermophilus (strain ATCC BAA-163 / DSM 7039 / HB27), this protein is V-type ATP synthase subunit F.